The chain runs to 100 residues: Aspartyl/glutamyl-tRNA(Asn/Gln) amidotransferase subunit C (100 aa).

Belongs to the GatC family. Heterotrimer of A, B and C subunits.

It carries out the reaction L-glutamyl-tRNA(Gln) + L-glutamine + ATP + H2O = L-glutaminyl-tRNA(Gln) + L-glutamate + ADP + phosphate + H(+). The catalysed reaction is L-aspartyl-tRNA(Asn) + L-glutamine + ATP + H2O = L-asparaginyl-tRNA(Asn) + L-glutamate + ADP + phosphate + 2 H(+). Its function is as follows. Allows the formation of correctly charged Asn-tRNA(Asn) or Gln-tRNA(Gln) through the transamidation of misacylated Asp-tRNA(Asn) or Glu-tRNA(Gln) in organisms which lack either or both of asparaginyl-tRNA or glutaminyl-tRNA synthetases. The reaction takes place in the presence of glutamine and ATP through an activated phospho-Asp-tRNA(Asn) or phospho-Glu-tRNA(Gln). The protein is Aspartyl/glutamyl-tRNA(Asn/Gln) amidotransferase subunit C of Rickettsia felis (strain ATCC VR-1525 / URRWXCal2) (Rickettsia azadi).